Reading from the N-terminus, the 302-residue chain is Probable 2-(5''-triphosphoribosyl)-3'-dephosphocoenzyme-A synthase (302 aa).

This sequence belongs to the CitG/MdcB family.

It carries out the reaction 3'-dephospho-CoA + ATP = 2'-(5''-triphospho-alpha-D-ribosyl)-3'-dephospho-CoA + adenine. The chain is Probable 2-(5''-triphosphoribosyl)-3'-dephosphocoenzyme-A synthase from Citrobacter koseri (strain ATCC BAA-895 / CDC 4225-83 / SGSC4696).